The primary structure comprises 373 residues: Methionine import ATP-binding protein MetN 1 (373 aa).

The ABC transporter domain occupies 29 to 270; sequence ILIDRVRKVY…PRHEVTRRFV (242 aa). 67–74 is an ATP binding site; sequence GRSGAGKS.

Belongs to the ABC transporter superfamily. Methionine importer (TC 3.A.1.24) family. In terms of assembly, the complex is composed of two ATP-binding proteins (MetN), two transmembrane proteins (MetI) and a solute-binding protein (MetQ).

It localises to the cell inner membrane. It carries out the reaction L-methionine(out) + ATP + H2O = L-methionine(in) + ADP + phosphate + H(+). The enzyme catalyses D-methionine(out) + ATP + H2O = D-methionine(in) + ADP + phosphate + H(+). Its function is as follows. Part of the ABC transporter complex MetNIQ involved in methionine import. Responsible for energy coupling to the transport system. The sequence is that of Methionine import ATP-binding protein MetN 1 from Rhodopseudomonas palustris (strain ATCC BAA-98 / CGA009).